The sequence spans 537 residues: Chaperonin GroEL (537 aa).

ATP contacts are provided by residues 29–32 (TLGP), 86–90 (DGTTT), Gly-413, 477–479 (NAA), and Asp-493.

The protein belongs to the chaperonin (HSP60) family. In terms of assembly, forms a cylinder of 14 subunits composed of two heptameric rings stacked back-to-back. Interacts with the co-chaperonin GroES.

The protein resides in the cytoplasm. It catalyses the reaction ATP + H2O + a folded polypeptide = ADP + phosphate + an unfolded polypeptide.. Its function is as follows. Together with its co-chaperonin GroES, plays an essential role in assisting protein folding. The GroEL-GroES system forms a nano-cage that allows encapsulation of the non-native substrate proteins and provides a physical environment optimized to promote and accelerate protein folding. The chain is Chaperonin GroEL from Lactobacillus delbrueckii subsp. bulgaricus (strain ATCC 11842 / DSM 20081 / BCRC 10696 / JCM 1002 / NBRC 13953 / NCIMB 11778 / NCTC 12712 / WDCM 00102 / Lb 14).